Reading from the N-terminus, the 267-residue chain is Hydroxyethylthiazole kinase 2 (267 aa).

M41 lines the substrate pocket. ATP-binding residues include K116 and T166. Residue G193 participates in substrate binding.

Belongs to the Thz kinase family. Requires Mg(2+) as cofactor.

It catalyses the reaction 5-(2-hydroxyethyl)-4-methylthiazole + ATP = 4-methyl-5-(2-phosphooxyethyl)-thiazole + ADP + H(+). The protein operates within cofactor biosynthesis; thiamine diphosphate biosynthesis; 4-methyl-5-(2-phosphoethyl)-thiazole from 5-(2-hydroxyethyl)-4-methylthiazole: step 1/1. Catalyzes the phosphorylation of the hydroxyl group of 4-methyl-5-beta-hydroxyethylthiazole (THZ). The polypeptide is Hydroxyethylthiazole kinase 2 (Streptococcus pneumoniae serotype 4 (strain ATCC BAA-334 / TIGR4)).